The following is a 303-amino-acid chain: E3 ubiquitin-protein ligase CHIP (303 aa).

Residues 1–10 (MKGKEEKEGG) show a composition bias toward basic and acidic residues. Positions 1-30 (MKGKEEKEGGARLGAGGGSPEKSPSAQELK) are disordered. A Glycyl lysine isopeptide (Lys-Gly) (interchain with G-Cter in ubiquitin) cross-link involves residue lysine 2. Phosphoserine is present on serine 19. Lysine 22 participates in a covalent cross-link: Glycyl lysine isopeptide (Lys-Gly) (interchain with G-Cter in ubiquitin). Residues serine 23 and serine 25 each carry the phosphoserine modification. TPR repeat units lie at residues 26–59 (AQELKEQGNRLFVGRKYPEAAACYGRAITRNPLV), 60–93 (AVYYTNRALCYLKMQQHEQALADCRRALELDGQS), and 95–127 (KAHFFLGQCQLEMESYDEAIANLQRAYSLAKEQ). The tract at residues 101–200 (GQCQLEMESY…SHVRAQQACI (100 aa)) is required for interaction with MAPK7. A required for interaction with and ubiquitination of MYOCD region spans residues 142–196 (AKKKRWNSIEERRIHQESELHSYLSRLIAAERERELEECQRNHEGDEDDSHVRAQ). The segment at 143–197 (KKKRWNSIEERRIHQESELHSYLSRLIAAERERELEECQRNHEGDEDDSHVRAQQ) is required for interaction with FOXO1. A required for ubiquitination of FOXO1 region spans residues 143-303 (KKKRWNSIEE…ISENGWVEDY (161 aa)). Serine 149 is modified (phosphoserine). Residues lysine 221 and lysine 255 each participate in a glycyl lysine isopeptide (Lys-Gly) (interchain with G-Cter in ubiquitin) cross-link. Residues 226–300 (DIPDYLCGKI…DAFISENGWV (75 aa)) enclose the U-box domain. Serine 273 bears the Phosphoserine mark.

As to quaternary structure, homodimer. Interacts with BAG2. Interacts with E2 ubiquitin conjugating enzymes UBE2D1, UBE2D2 and UBE2D3. Detected in a ternary complex containing STUB1, HSPA1A and HSPBP1. Part of a complex composed of STUB1/CHIP, VCP/p97, CHRNA3, and UBXN2A that modulates the ubiquitination and endoplasmic reticulum-associated degradation (ERAD) of CHRNA3. Within the complex UBXN2A acts as a scaffold protein required for the interaction of CHRNA3 with VCP/p97, this interaction also inhibits CHRNA3 ubiquitination by STUB1/CHIP and subsequently ERAD. Interacts with MKKS. Interacts with DNAAF4. Interacts (when monoubiquitinated) with ATXN3. Interacts with UBE2W. Interacts (via the U-box domain) with the UBE2V2-UBE2N heterodimer; the complex has a specific 'Lys-63'-linked polyubiquitination activity. Interacts with DNAJB6. Interacts with FLCN. Interacts with HSP90AA1. Interacts with HSP90. Interacts with UBE2N and UBE2V1. Interacts (via TPR repeats) with HSPA8 (via C-terminus). Interacts (via TPR repeats) with HSPA1A (via C-terminus). Interacts with the non-acetylated form of HSPA1A and HSPA1B. Interacts with SMAD3 and HSP90AB1. Interacts with UBE4B. Interacts with PRMT5. Interacts with MYOCD (via C-terminus). Interacts with FOXO1 (when phosphorylated on 'Ser-256'). Interacts with MAPK7/ERK5; the interaction is enhanced in the presence of IGF1 or MAP2K5 and promotes STUB1/CHIP E3 ligase activity. Interacts with and ubiquitinates ESR1; the interaction is promoted in the absence of estradiol (17-beta-estradiol/E2). Interacts with ESR2. Interacts with and ubiquitinates NFATC3; HSPA1A/HSP70 is required as a co-chaperone. In macrophages, interacts with PAQR3; the interaction promotes PPARG poylubiquitination and STUB1-mediated degradation. Component of the chaperone-assisted selective autophagy (CASA) complex consisting of BAG3, HSPA8/HSC70, HSPB8 and STUB1/CHIP. Monoubiquitinated at Lys-2 following cell stress by UBE2W, promoting the interaction with ATXN3. Auto-ubiquitinated; mediated by UBE2D1 and UBE2D2 and enhanced in the presence of MAP2K5. Expressed in differentiated myotubes (at protein level). Highly expressed in skeletal muscle, heart, pancreas, brain and placenta. Detected in kidney, liver and lung.

Its subcellular location is the cytoplasm. The protein localises to the nucleus. It localises to the mitochondrion. It catalyses the reaction S-ubiquitinyl-[E2 ubiquitin-conjugating enzyme]-L-cysteine + [acceptor protein]-L-lysine = [E2 ubiquitin-conjugating enzyme]-L-cysteine + N(6)-ubiquitinyl-[acceptor protein]-L-lysine.. It participates in protein modification; protein ubiquitination. Functionally, E3 ubiquitin-protein ligase which targets misfolded chaperone substrates towards proteasomal degradation. Plays a role in the maintenance of mitochondrial morphology and promotes mitophagic removal of dysfunctional mitochondria; thereby acts as a protector against apoptosis in response to cellular stress. Negatively regulates vascular smooth muscle contraction, via degradation of the transcriptional activator MYOCD and subsequent loss of transcription of genes involved in vascular smooth muscle contraction. Promotes survival and proliferation of cardiac smooth muscle cells via ubiquitination and degradation of FOXO1, resulting in subsequent repression of FOXO1-mediated transcription of pro-apoptotic genes. Ubiquitinates ICER-type isoforms of CREM and targets them for proteasomal degradation, thereby acts as a positive effector of MAPK/ERK-mediated inhibition of apoptosis in cardiomyocytes. Inhibits lipopolysaccharide-induced apoptosis and hypertrophy in cardiomyocytes, via ubiquitination and subsequent proteasomal degradation of NFATC3. Collaborates with ATXN3 in the degradation of misfolded chaperone substrates: ATXN3 restricting the length of ubiquitin chain attached to STUB1/CHIP substrates and preventing further chain extension. Ubiquitinates NOS1 in concert with Hsp70 and Hsp40. Modulates the activity of several chaperone complexes, including Hsp70, Hsc70 and Hsp90. Ubiquitinates CHRNA3 targeting it for endoplasmic reticulum-associated degradation in cortical neurons, as part of the STUB1-VCP-UBXN2A complex. Ubiquitinates and promotes ESR1 proteasomal degradation in response to age-related circulating estradiol (17-beta-estradiol/E2) decline, thereby promotes neuronal apoptosis in response to ischemic reperfusion injury. Mediates transfer of non-canonical short ubiquitin chains to HSPA8 that have no effect on HSPA8 degradation. Mediates polyubiquitination of DNA polymerase beta (POLB) at 'Lys-41', 'Lys-61' and 'Lys-81', thereby playing a role in base-excision repair: catalyzes polyubiquitination by amplifying the HUWE1/ARF-BP1-dependent monoubiquitination and leading to POLB-degradation by the proteasome. Mediates polyubiquitination of CYP3A4. Ubiquitinates EPHA2 and may regulate the receptor stability and activity through proteasomal degradation. Acts as a co-chaperone for HSPA1A and HSPA1B chaperone proteins and promotes ubiquitin-mediated protein degradation. Negatively regulates the suppressive function of regulatory T-cells (Treg) during inflammation by mediating the ubiquitination and degradation of FOXP3 in a HSPA1A/B-dependent manner. Catalyzes monoubiquitination of SIRT6, preventing its degradation by the proteasome. Likely mediates polyubiquitination and down-regulates plasma membrane expression of PD-L1/CD274, an immune inhibitory ligand critical for immune tolerance to self and antitumor immunity. Negatively regulates TGF-beta signaling by modulating the basal level of SMAD3 via ubiquitin-mediated degradation. Plays a role in the degradation of TP53. Mediates ubiquitination of RIPK3 leading to its subsequent proteasome-dependent degradation. May regulate myosin assembly in striated muscles together with UBE4B and VCP/p97 by targeting myosin chaperone UNC45B for proteasomal degradation. Ubiquitinates PPARG in macrophages playing a role in M2 macrophages polarization and angiogenesis. This is E3 ubiquitin-protein ligase CHIP from Homo sapiens (Human).